Reading from the N-terminus, the 1035-residue chain is Beta-galactosidase (1035 aa).

Positions 101 and 199 each coordinate substrate. Aspartate 199 contacts Na(+). Mg(2+) is bound by residues glutamate 415, histidine 417, and glutamate 460. Residues glutamate 460 and 540–543 (EYAH) each bind substrate. Residue glutamate 460 is the Proton donor of the active site. Glutamate 540 functions as the Nucleophile in the catalytic mechanism. Residue asparagine 600 participates in Mg(2+) binding. 2 residues coordinate Na(+): phenylalanine 604 and asparagine 607. Substrate-binding residues include asparagine 607 and tryptophan 1011.

It belongs to the glycosyl hydrolase 2 family. As to quaternary structure, homotetramer. Mg(2+) serves as cofactor. Na(+) is required as a cofactor.

The catalysed reaction is Hydrolysis of terminal non-reducing beta-D-galactose residues in beta-D-galactosides.. In Psychromonas ingrahamii (strain DSM 17664 / CCUG 51855 / 37), this protein is Beta-galactosidase.